An 875-amino-acid chain; its full sequence is cGMP-specific 3',5'-cyclic phosphodiesterase (875 aa).

Disordered stretches follow at residues 1–29 (MERAGPSFGQQRQQQQPQQQKQQQRDQDS) and 78–102 (SCSCPLQQSPRADNSAPGTPTRKIS). Residues 10–22 (QQRQQQQPQQQKQ) are compositionally biased toward low complexity. Residues 78–101 (SCSCPLQQSPRADNSAPGTPTRKI) show a composition bias toward polar residues. Serine 102 carries the post-translational modification Phosphoserine. GAF domains are found at residues 164–314 (DVTA…GIVL) and 346–503 (SLEV…GLGI). Residues 536–860 (ETRELQSLAA…QKWQALAEQQ (325 aa)) enclose the PDEase domain. The Proton donor role is filled by histidine 613. Zn(2+) contacts are provided by histidine 617, histidine 653, aspartate 654, and aspartate 764. Aspartate 654 is a binding site for Mg(2+). Glutamine 817 is a 3',5'-cyclic GMP binding site.

The protein belongs to the cyclic nucleotide phosphodiesterase family. Zn(2+) is required as a cofactor. The cofactor is Mg(2+). Phosphorylation is regulated by binding of cGMP to the two allosteric sites. Phosphorylation by PRKG1 leads to its activation. Expressed in aortic smooth muscle cells, heart, placenta, skeletal muscle and pancreas and, to a much lesser extent, in brain, liver and lung.

It carries out the reaction 3',5'-cyclic GMP + H2O = GMP + H(+). Its pathway is purine metabolism; 3',5'-cyclic GMP degradation; GMP from 3',5'-cyclic GMP: step 1/1. With respect to regulation, sildenafil (Viagra) is a highly selective and potent inhibitor of PDE5A and is effective in the treatment of penile erectile dysfunction. Also inhibited by zaprinast. Plays a role in signal transduction by regulating the intracellular concentration of cyclic nucleotides. This phosphodiesterase catalyzes the specific hydrolysis of cGMP to 5'-GMP. Specifically regulates nitric-oxide-generated cGMP. This Homo sapiens (Human) protein is cGMP-specific 3',5'-cyclic phosphodiesterase.